Consider the following 101-residue polypeptide: Iron-sulfur cluster assembly protein CyaY (101 aa).

The protein belongs to the frataxin family.

Functionally, involved in iron-sulfur (Fe-S) cluster assembly. May act as a regulator of Fe-S biogenesis. This Actinobacillus pleuropneumoniae serotype 5b (strain L20) protein is Iron-sulfur cluster assembly protein CyaY.